A 333-amino-acid chain; its full sequence is tRNA N6-adenosine threonylcarbamoyltransferase (333 aa).

Residues His-111 and His-115 each coordinate Fe cation. Substrate is bound by residues 134–138 (LASGG), Asp-167, Gly-180, and Asn-273. Asp-301 provides a ligand contact to Fe cation.

This sequence belongs to the KAE1 / TsaD family. Requires Fe(2+) as cofactor.

It is found in the cytoplasm. It catalyses the reaction L-threonylcarbamoyladenylate + adenosine(37) in tRNA = N(6)-L-threonylcarbamoyladenosine(37) in tRNA + AMP + H(+). Functionally, required for the formation of a threonylcarbamoyl group on adenosine at position 37 (t(6)A37) in tRNAs that read codons beginning with adenine. Is involved in the transfer of the threonylcarbamoyl moiety of threonylcarbamoyl-AMP (TC-AMP) to the N6 group of A37, together with TsaE and TsaB. TsaD likely plays a direct catalytic role in this reaction. This is tRNA N6-adenosine threonylcarbamoyltransferase from Desulforapulum autotrophicum (strain ATCC 43914 / DSM 3382 / VKM B-1955 / HRM2) (Desulfobacterium autotrophicum).